Consider the following 1182-residue polypeptide: Lysine-specific demethylase hairless (1182 aa).

Disordered regions lie at residues 227–257 (LGLA…GAGR), 302–380 (YQLG…KKTW), 411–443 (AGSP…ARAW), and 507–546 (TGHS…ASLN). Positions 307–321 (PATPRCPSPGPPTPP) are enriched in pro residues. The short motif at 561–565 (LCRLL) is the LXXLL motif 1 element. The C6-type zinc-finger motif lies at 595 to 620 (CSRCHHGLFNTHWRCSHCSHRLCVAC). The disordered stretch occupies residues 697–746 (GDGGQQKEPTEKTPPTPQPSCNGDSNRTKDIKEETPDSTESPAEDGAGRS). Residues 722 to 731 (NRTKDIKEET) are compositionally biased toward basic and acidic residues. Positions 753–757 (LCELL) match the LXXLL motif 2 motif. One can recognise a JmjC domain in the interval 939 to 1150 (DASRVQNLAS…LSAQLYHQGA (212 aa)). Fe cation-binding residues include Cys-1000, Glu-1002, and His-1118.

Fe(2+) is required as a cofactor. Expressed predominantly in brain, hair follicles and interfollicular epidermis. No expression in dermis.

The protein localises to the nucleus. The catalysed reaction is N(6),N(6)-dimethyl-L-lysyl(9)-[histone H3] + 2 2-oxoglutarate + 2 O2 = L-lysyl(9)-[histone H3] + 2 formaldehyde + 2 succinate + 2 CO2. Its function is as follows. Histone demethylase that specifically demethylates both mono- and dimethylated 'Lys-9' of histone H3. May act as a transcription regulator controlling hair biology (via targeting of collagens), neural activity, and cell cycle. This is Lysine-specific demethylase hairless (Hr) from Mus musculus (Mouse).